The primary structure comprises 274 residues: 3-methyl-2-oxobutanoate hydroxymethyltransferase (274 aa).

The Mg(2+) site is built by D44 and D83. 3-methyl-2-oxobutanoate-binding positions include 44-45, D83, and K113; that span reads DS. E115 is a Mg(2+) binding site. The active-site Proton acceptor is the E182.

The protein belongs to the PanB family. In terms of assembly, homodecamer; pentamer of dimers. Mg(2+) is required as a cofactor.

It localises to the cytoplasm. It catalyses the reaction 3-methyl-2-oxobutanoate + (6R)-5,10-methylene-5,6,7,8-tetrahydrofolate + H2O = 2-dehydropantoate + (6S)-5,6,7,8-tetrahydrofolate. The protein operates within cofactor biosynthesis; (R)-pantothenate biosynthesis; (R)-pantoate from 3-methyl-2-oxobutanoate: step 1/2. Its function is as follows. Catalyzes the reversible reaction in which hydroxymethyl group from 5,10-methylenetetrahydrofolate is transferred onto alpha-ketoisovalerate to form ketopantoate. This chain is 3-methyl-2-oxobutanoate hydroxymethyltransferase, found in Campylobacter jejuni subsp. jejuni serotype O:6 (strain 81116 / NCTC 11828).